Here is a 155-residue protein sequence, read N- to C-terminus: SsrA-binding protein (155 aa).

It belongs to the SmpB family.

It is found in the cytoplasm. Its function is as follows. Required for rescue of stalled ribosomes mediated by trans-translation. Binds to transfer-messenger RNA (tmRNA), required for stable association of tmRNA with ribosomes. tmRNA and SmpB together mimic tRNA shape, replacing the anticodon stem-loop with SmpB. tmRNA is encoded by the ssrA gene; the 2 termini fold to resemble tRNA(Ala) and it encodes a 'tag peptide', a short internal open reading frame. During trans-translation Ala-aminoacylated tmRNA acts like a tRNA, entering the A-site of stalled ribosomes, displacing the stalled mRNA. The ribosome then switches to translate the ORF on the tmRNA; the nascent peptide is terminated with the 'tag peptide' encoded by the tmRNA and targeted for degradation. The ribosome is freed to recommence translation, which seems to be the essential function of trans-translation. This chain is SsrA-binding protein, found in Bacillus cereus (strain 03BB102).